A 102-amino-acid chain; its full sequence is NADH-quinone oxidoreductase subunit K (102 aa).

3 consecutive transmembrane segments (helical) span residues 5 to 25 (LGHY…GIFL), 31 to 51 (IVLL…FVAF), and 62 to 82 (VFVF…LAIL).

This sequence belongs to the complex I subunit 4L family. NDH-1 is composed of 14 different subunits. Subunits NuoA, H, J, K, L, M, N constitute the membrane sector of the complex.

It is found in the cell inner membrane. The catalysed reaction is a quinone + NADH + 5 H(+)(in) = a quinol + NAD(+) + 4 H(+)(out). NDH-1 shuttles electrons from NADH, via FMN and iron-sulfur (Fe-S) centers, to quinones in the respiratory chain. The immediate electron acceptor for the enzyme in this species is believed to be ubiquinone. Couples the redox reaction to proton translocation (for every two electrons transferred, four hydrogen ions are translocated across the cytoplasmic membrane), and thus conserves the redox energy in a proton gradient. The sequence is that of NADH-quinone oxidoreductase subunit K from Methylibium petroleiphilum (strain ATCC BAA-1232 / LMG 22953 / PM1).